We begin with the raw amino-acid sequence, 1088 residues long: DNA mismatch repair protein MutS (1088 aa).

Positions 498–579 (PLDGITPPDD…SFEMPSLHGH (82 aa)) are disordered. The span at 537–546 (DLFDEEEEQE) shows a compositional bias: acidic residues. 816–823 (GPNMSGKS) provides a ligand contact to ATP. The interval 1000–1048 (LERRAPRSTPQPAPERTEERPAAGRPTARSHSAARGDPPRAPDGQLSLF) is disordered.

Belongs to the DNA mismatch repair MutS family.

In terms of biological role, this protein is involved in the repair of mismatches in DNA. It is possible that it carries out the mismatch recognition step. This protein has a weak ATPase activity. In Roseiflexus castenholzii (strain DSM 13941 / HLO8), this protein is DNA mismatch repair protein MutS.